Reading from the N-terminus, the 349-residue chain is KH domain-containing, RNA-binding, signal transduction-associated protein 2 (349 aa).

The region spanning 65–135 is the KH domain; the sequence is LIPVKQYPKF…HLSDELHVLI (71 aa). Disordered regions lie at residues 181 to 263 and 321 to 349; these read SEES…PPPA and EWATTRSSLKAPPPRSARGGYREHPYGRY. Positions 218-231 are enriched in low complexity; sequence RGVLTPRGTTVTRG. An omega-N-methylarginine mark is found at R230 and R240. The segment covering 340–349 has biased composition (basic and acidic residues); the sequence is GYREHPYGRY.

This sequence belongs to the KHDRBS family. As to quaternary structure, self-associates to form homooligomers. Interacts with KHDRBS1/SAM68; heterooligomer formation of KHDRBS family proteins may modulate RNA substrate specificity. Interacts with RBMX, SAFB, SFRS9 and YTHDC1. Interacts with FYN and PLCG1 (via SH3 domain). Interacts (phosphorylated) with FYN, GRB2, PLCG1 and RASA1 (via SH2 domain). Methylated. Post-translationally, tyrosine phosphorylated by FYN, PTK6 and SRC. Tyrosine phosphorylated by SRC during mitosis. As to expression, expressed in heart, skin, brain, colon, spleen, kidney, cervix and testis. In adult cerebellum expressed predominantly in Purkinje cells and in the hippocampus is abundantly expressed in glutamatergic dentate granule cells and in specific inhibitory Schaffer collateral-associated and path-associated interneurons; expression is restricted to neuronal subpopulations largely non-overlapping with expression of KHDRBS3/SLM-2 (at protein level).

The protein resides in the nucleus. In terms of biological role, RNA-binding protein that plays a role in the regulation of alternative splicing and influences mRNA splice site selection and exon inclusion. Binds both poly(A) and poly(U) homopolymers. Phosphorylation by PTK6 inhibits its RNA-binding ability. Induces an increased concentration-dependent incorporation of exon in CD44 pre-mRNA by direct binding to purine-rich exonic enhancer. Can regulate alternative splicing of neurexins NRXN1-3 in the laminin G-like domain 6 containing the evolutionary conserved neurexin alternative spliced segment 4 (AS4) involved in neurexin selective targeting to postsynaptic partners. Regulates cell-type specific alternative splicing of NRXN1 at AS4 and acts synergystically with SAM68 in exon skipping. In contrast acts antagonistically with SAM68 in NRXN3 exon skipping at AS4. Its phosphorylation by FYN inhibits its ability to regulate splice site selection. May function as an adapter protein for Src kinases during mitosis. The chain is KH domain-containing, RNA-binding, signal transduction-associated protein 2 (Khdrbs2) from Mus musculus (Mouse).